The chain runs to 333 residues: Ketol-acid reductoisomerase (NADP(+)) (333 aa).

The KARI N-terminal Rossmann domain maps to 6-186 (TRVYTECDAD…GALRAGAIQT (181 aa)). Residues 29-32 (YGSQ), Lys-52, Ser-55, Ser-57, and 87-90 (DPAQ) contribute to the NADP(+) site. His-112 is an active-site residue. Gly-138 is a binding site for NADP(+). A KARI C-terminal knotted domain is found at 187-332 (TFTEETETDL…ARLRALFSWS (146 aa)). Residues Asp-195, Glu-199, Glu-231, and Glu-235 each coordinate Mg(2+). Position 256 (Ser-256) interacts with substrate.

This sequence belongs to the ketol-acid reductoisomerase family. Mg(2+) serves as cofactor.

It carries out the reaction (2R)-2,3-dihydroxy-3-methylbutanoate + NADP(+) = (2S)-2-acetolactate + NADPH + H(+). The enzyme catalyses (2R,3R)-2,3-dihydroxy-3-methylpentanoate + NADP(+) = (S)-2-ethyl-2-hydroxy-3-oxobutanoate + NADPH + H(+). It functions in the pathway amino-acid biosynthesis; L-isoleucine biosynthesis; L-isoleucine from 2-oxobutanoate: step 2/4. Its pathway is amino-acid biosynthesis; L-valine biosynthesis; L-valine from pyruvate: step 2/4. Involved in the biosynthesis of branched-chain amino acids (BCAA). Catalyzes an alkyl-migration followed by a ketol-acid reduction of (S)-2-acetolactate (S2AL) to yield (R)-2,3-dihydroxy-isovalerate. In the isomerase reaction, S2AL is rearranged via a Mg-dependent methyl migration to produce 3-hydroxy-3-methyl-2-ketobutyrate (HMKB). In the reductase reaction, this 2-ketoacid undergoes a metal-dependent reduction by NADPH to yield (R)-2,3-dihydroxy-isovalerate. This Tropheryma whipplei (strain TW08/27) (Whipple's bacillus) protein is Ketol-acid reductoisomerase (NADP(+)).